The primary structure comprises 678 residues: DNA ligase (678 aa).

Residues 34–38 (DSEYD), 83–84 (SL), and Glu-114 each bind NAD(+). The active-site N6-AMP-lysine intermediate is Lys-116. 4 residues coordinate NAD(+): Arg-137, Glu-176, Lys-293, and Lys-317. The Zn(2+) site is built by Cys-411, Cys-414, Cys-429, and Cys-435. The region spanning 594-678 (PTRQPLNGES…LMAGYGQTLS (85 aa)) is the BRCT domain.

This sequence belongs to the NAD-dependent DNA ligase family. LigA subfamily. Requires Mg(2+) as cofactor. The cofactor is Mn(2+).

The catalysed reaction is NAD(+) + (deoxyribonucleotide)n-3'-hydroxyl + 5'-phospho-(deoxyribonucleotide)m = (deoxyribonucleotide)n+m + AMP + beta-nicotinamide D-nucleotide.. Its function is as follows. DNA ligase that catalyzes the formation of phosphodiester linkages between 5'-phosphoryl and 3'-hydroxyl groups in double-stranded DNA using NAD as a coenzyme and as the energy source for the reaction. It is essential for DNA replication and repair of damaged DNA. This chain is DNA ligase, found in Acinetobacter baumannii (strain SDF).